The sequence spans 680 residues: WD repeat-containing protein 48 homolog (680 aa).

8 WD repeats span residues 26 to 65, 71 to 110, 113 to 152, 164 to 203, 206 to 245, 248 to 287, 290 to 329, and 350 to 389; these read QHRN…SEKY, HHND…CMST, THRD…ALTA, GSKD…RIMK, GHTE…CVQT, VHKE…NKTL, EEQA…RCTL, and KGGA…KKEQ. The tract at residues 592–616 is disordered; the sequence is ETTPSGGNANNSLQNSQSDANSEGS.

Belongs to the WD repeat WDR48 family. Catalytic component of the Usp12-46 deubiquitylase complex consisting of Usp12-46, Wdr20 and Uaf1; regulatory subunit that, together wtih Wdr20, stabilizes Usp12-46. The Usp12-46 deubiquitylase complex associates with arr/arrow; the interaction leads to deubiquitination and stabilization of arr/arrow.

In terms of biological role, regulatory component of the Usp12-46 deubiquitylase complex. activates deubiquitination by increasing the catalytic turnover without increasing the affinity of deubiquitinating enzymes for the substrate. The complex deubiquitylates the wg/wingless-signaling receptor arr/arrow, which stabilizes the receptor and increases its concentration at the cell surface; this enhances the sensitivity of cells to wg/wingless-signal stimulation. This increases the amplitude and spatial range of the signaling response to the wg/wingless morphogen gradient, facilitating the precise concentration-dependent regulation of its target genes. Together with Wdr20 and Usp12-46 required for wg/wingless-mediated signaling in the wing imaginal disc and for wg/wingless-dependent regulation of intestinal stem cell proliferation. This Drosophila sechellia (Fruit fly) protein is WD repeat-containing protein 48 homolog.